A 118-amino-acid chain; its full sequence is Large ribosomal subunit protein uL18 (118 aa).

It belongs to the universal ribosomal protein uL18 family. As to quaternary structure, part of the 50S ribosomal subunit; part of the 5S rRNA/L5/L18/L25 subcomplex. Contacts the 5S and 23S rRNAs.

In terms of biological role, this is one of the proteins that bind and probably mediate the attachment of the 5S RNA into the large ribosomal subunit, where it forms part of the central protuberance. In Limosilactobacillus reuteri (strain DSM 20016) (Lactobacillus reuteri), this protein is Large ribosomal subunit protein uL18.